We begin with the raw amino-acid sequence, 245 residues long: MLKRREPDMFKRVLLKLSGEFLAGDNGFGISPETTAELARRIIGALDGTEVELAVVIGGGNLWRGARNGQGMDPATADYIGMLGTVMNAMALQDAMEAAGKPTRIMSAIHMQQVAEPYIRRRAMRHLEKGRVVIFGGGNGAPFFTTDTTSTLRALEIGADVVLMAKNAVDGVYDSDPRKNPDAKRYEQLTHMDVVEQRLEVMDATALTLCMDKGLPIVVFDIFEEGNLARLLRGERVGTLIQSRG.

Residue 16–19 (KLSG) participates in ATP binding. The involved in allosteric activation by GTP stretch occupies residues 24 to 29 (GDNGFG). Residue G59 coordinates UMP. The ATP site is built by G60 and R64. Residues D78 and 139 to 146 (NGAPFFTT) each bind UMP. N167, Y173, and D176 together coordinate ATP.

Belongs to the UMP kinase family. As to quaternary structure, homohexamer.

The protein resides in the cytoplasm. It carries out the reaction UMP + ATP = UDP + ADP. It functions in the pathway pyrimidine metabolism; CTP biosynthesis via de novo pathway; UDP from UMP (UMPK route): step 1/1. With respect to regulation, allosterically activated by GTP. Inhibited by UTP. In terms of biological role, catalyzes the reversible phosphorylation of UMP to UDP. In Deinococcus radiodurans (strain ATCC 13939 / DSM 20539 / JCM 16871 / CCUG 27074 / LMG 4051 / NBRC 15346 / NCIMB 9279 / VKM B-1422 / R1), this protein is Uridylate kinase.